The chain runs to 150 residues: Large-conductance mechanosensitive channel (150 aa).

The next 2 membrane-spanning stretches (helical) occupy residues 14 to 34 (VIDL…VTSF) and 81 to 101 (GVFL…FLVV).

The protein belongs to the MscL family. As to quaternary structure, homopentamer.

It localises to the cell membrane. Channel that opens in response to stretch forces in the membrane lipid bilayer. May participate in the regulation of osmotic pressure changes within the cell. The protein is Large-conductance mechanosensitive channel of Syntrophomonas wolfei subsp. wolfei (strain DSM 2245B / Goettingen).